The chain runs to 789 residues: Molybdenum cofactor sulfurase (789 aa).

Residue Lys251 is modified to N6-(pyridoxal phosphate)lysine. The active site involves Cys422. An MOSC domain is found at Gly628–Asp789. Phosphoserine is present on Ser741.

The protein belongs to the class-V pyridoxal-phosphate-dependent aminotransferase family. MOCOS subfamily. Pyridoxal 5'-phosphate is required as a cofactor.

The catalysed reaction is Mo-molybdopterin + L-cysteine + AH2 = thio-Mo-molybdopterin + L-alanine + A + H2O. It functions in the pathway cofactor biosynthesis; molybdopterin biosynthesis. Functionally, sulfurates the molybdenum cofactor. Sulfation of molybdenum is essential for xanthine dehydrogenase (XDH) and aldehyde oxidase (ADO) enzymes in which molybdenum cofactor is liganded by 1 oxygen and 1 sulfur atom in active form. This chain is Molybdenum cofactor sulfurase, found in Drosophila willistoni (Fruit fly).